The sequence spans 427 residues: 3-phosphoshikimate 1-carboxyvinyltransferase (427 aa).

Lys-20, Ser-21, and Arg-25 together coordinate 3-phosphoshikimate. Lys-20 serves as a coordination point for phosphoenolpyruvate. Phosphoenolpyruvate contacts are provided by Gly-92 and Arg-120. 3-phosphoshikimate is bound by residues Ser-166, Gln-168, Asp-312, and Lys-339. Position 168 (Gln-168) interacts with phosphoenolpyruvate. The active-site Proton acceptor is the Asp-312. Phosphoenolpyruvate is bound by residues Arg-343 and Arg-385.

It belongs to the EPSP synthase family. Monomer.

Its subcellular location is the cytoplasm. The catalysed reaction is 3-phosphoshikimate + phosphoenolpyruvate = 5-O-(1-carboxyvinyl)-3-phosphoshikimate + phosphate. It functions in the pathway metabolic intermediate biosynthesis; chorismate biosynthesis; chorismate from D-erythrose 4-phosphate and phosphoenolpyruvate: step 6/7. Functionally, catalyzes the transfer of the enolpyruvyl moiety of phosphoenolpyruvate (PEP) to the 5-hydroxyl of shikimate-3-phosphate (S3P) to produce enolpyruvyl shikimate-3-phosphate and inorganic phosphate. The sequence is that of 3-phosphoshikimate 1-carboxyvinyltransferase from Streptococcus pneumoniae serotype 19F (strain G54).